A 261-amino-acid polypeptide reads, in one-letter code: Cytochrome c oxidase subunit 3 (261 aa).

Residues 1-15 (MTHQTHAYHMVNPSP) lie on the Mitochondrial matrix side of the membrane. A helical transmembrane segment spans residues 16 to 34 (WPLTGALSALLMTSGLIMW). The Mitochondrial intermembrane portion of the chain corresponds to 35-40 (FHFNST). Residues 41–66 (ILLMLGLTTNMLTMYQWWRDIIREST) traverse the membrane as a helical segment. Topologically, residues 67–72 (FQGHHT) are mitochondrial matrix. The chain crosses the membrane as a helical span at residues 73-105 (PTVQKGLRYGMILFIISEVLFFTGFFWAFYHSS). Over 106 to 128 (LAPTPELGGCWPPTGIHPLNPLE) the chain is Mitochondrial intermembrane. The chain crosses the membrane as a helical span at residues 129-152 (VPLLNTSVLLASGVSITWAHHSLM). The Mitochondrial matrix segment spans residues 153–155 (EGN). Residues 156-183 (RNHMLQALFITIALGVYFTLLQASEYYE) traverse the membrane as a helical segment. Residues 184–190 (APFTISD) are Mitochondrial intermembrane-facing. Residues 191-223 (GVYGSTFFVATGFHGLHVIIGSTFLIVCFFRQL) form a helical membrane-spanning segment. Residues 224-232 (KFHFTSSHH) are Mitochondrial matrix-facing. The chain crosses the membrane as a helical span at residues 233–256 (FGFEAAAWYWHFVDVVWLFLYVSI). At 257 to 261 (YWWGS) the chain is on the mitochondrial intermembrane side.

The protein belongs to the cytochrome c oxidase subunit 3 family. In terms of assembly, component of the cytochrome c oxidase (complex IV, CIV), a multisubunit enzyme composed of 14 subunits. The complex is composed of a catalytic core of 3 subunits MT-CO1, MT-CO2 and MT-CO3, encoded in the mitochondrial DNA, and 11 supernumerary subunits COX4I, COX5A, COX5B, COX6A, COX6B, COX6C, COX7A, COX7B, COX7C, COX8 and NDUFA4, which are encoded in the nuclear genome. The complex exists as a monomer or a dimer and forms supercomplexes (SCs) in the inner mitochondrial membrane with NADH-ubiquinone oxidoreductase (complex I, CI) and ubiquinol-cytochrome c oxidoreductase (cytochrome b-c1 complex, complex III, CIII), resulting in different assemblies (supercomplex SCI(1)III(2)IV(1) and megacomplex MCI(2)III(2)IV(2)).

It localises to the mitochondrion inner membrane. The enzyme catalyses 4 Fe(II)-[cytochrome c] + O2 + 8 H(+)(in) = 4 Fe(III)-[cytochrome c] + 2 H2O + 4 H(+)(out). In terms of biological role, component of the cytochrome c oxidase, the last enzyme in the mitochondrial electron transport chain which drives oxidative phosphorylation. The respiratory chain contains 3 multisubunit complexes succinate dehydrogenase (complex II, CII), ubiquinol-cytochrome c oxidoreductase (cytochrome b-c1 complex, complex III, CIII) and cytochrome c oxidase (complex IV, CIV), that cooperate to transfer electrons derived from NADH and succinate to molecular oxygen, creating an electrochemical gradient over the inner membrane that drives transmembrane transport and the ATP synthase. Cytochrome c oxidase is the component of the respiratory chain that catalyzes the reduction of oxygen to water. Electrons originating from reduced cytochrome c in the intermembrane space (IMS) are transferred via the dinuclear copper A center (CU(A)) of subunit 2 and heme A of subunit 1 to the active site in subunit 1, a binuclear center (BNC) formed by heme A3 and copper B (CU(B)). The BNC reduces molecular oxygen to 2 water molecules using 4 electrons from cytochrome c in the IMS and 4 protons from the mitochondrial matrix. The polypeptide is Cytochrome c oxidase subunit 3 (MT-CO3) (Aepyceros melampus (Impala)).